Here is a 520-residue protein sequence, read N- to C-terminus: Glucose-1-phosphate adenylyltransferase small subunit, chloroplastic (520 aa).

Residues 1–71 constitute a chloroplast transit peptide; sequence MATMAAIGSL…RTPSIVSPKA (71 aa). Residues 1–81 are disordered; that stretch reads MATMAAIGSL…VSDSQNSQTC (81 aa). Residues 14 to 27 are compositionally biased toward low complexity; sequence SSSSNHTRRLSSSS. Polar residues predominate over residues 28 to 51; that stretch reads QRKTLSFSSSSLTGEKLNPTQEII.

This sequence belongs to the bacterial/plant glucose-1-phosphate adenylyltransferase family. Heterotetramer. In terms of tissue distribution, leaves.

The protein localises to the plastid. Its subcellular location is the chloroplast. The catalysed reaction is alpha-D-glucose 1-phosphate + ATP + H(+) = ADP-alpha-D-glucose + diphosphate. Its pathway is glycan biosynthesis; starch biosynthesis. Activated by 3'phosphoglycerate, inhibited by orthophosphate. Allosteric regulation. This protein plays a role in synthesis of starch. It catalyzes the synthesis of the activated glycosyl donor, ADP-glucose from Glc-1-P and ATP. This chain is Glucose-1-phosphate adenylyltransferase small subunit, chloroplastic (AGPS1), found in Brassica napus (Rape).